The sequence spans 459 residues: Cysteine--tRNA ligase (459 aa).

Cysteine 28 contacts Zn(2+). The 'HIGH' region motif lies at 30–40 (VTVYDLCHFGH). Residues cysteine 209, histidine 234, and glutamate 238 each contribute to the Zn(2+) site. The short motif at 266-270 (KMSKS) is the 'KMSKS' region element. Lysine 269 contributes to the ATP binding site.

The protein belongs to the class-I aminoacyl-tRNA synthetase family. In terms of assembly, monomer. The cofactor is Zn(2+).

The protein localises to the cytoplasm. The catalysed reaction is tRNA(Cys) + L-cysteine + ATP = L-cysteinyl-tRNA(Cys) + AMP + diphosphate. The polypeptide is Cysteine--tRNA ligase (Actinobacillus pleuropneumoniae serotype 5b (strain L20)).